Here is a 163-residue protein sequence, read N- to C-terminus: Protein GOLVEN 3 (163 aa).

The first 20 residues, 1–20 (MMRFTIIVIAFLLIIQSLEE), serve as a signal peptide directing secretion. Positions 21-141 (EHILVYAHEG…MEKLARLLRD (121 aa)) are excised as a propeptide. Tyrosine 143 is modified (sulfotyrosine). The disordered stretch occupies residues 144–163 (PIYSKPRRKPPVNNRAPDKF). The residue at position 154 (proline 154) is a Hydroxyproline. The propeptide occupies 158-163 (RAPDKF).

It belongs to the RGF family. Binds to LRR receptor-like serine/threonine-protein kinases RGI1, RGI2 and RGI3 to trigger their dimerization with SERK proteins and subsequent signaling. As to expression, expressed in roots, specifically in the root apical meristem (RAM).

It is found in the secreted. Functionally, signaling peptide (root growth factor) required during root gravitropism in a PIN2-traffic dependent manner, thus influencing the formation of auxin gradients. Maintains the postembryonic root stem cell niche. In Arabidopsis thaliana (Mouse-ear cress), this protein is Protein GOLVEN 3.